A 254-amino-acid chain; its full sequence is Probable triosephosphate isomerase 2 (254 aa).

Position 9 to 11 (Asn-9 to Lys-11) interacts with substrate. The active-site Electrophile is His-96. Glu-168 (proton acceptor) is an active-site residue. Residues Gly-174 and Ser-212 each coordinate substrate.

The protein belongs to the triosephosphate isomerase family. As to quaternary structure, homodimer.

It localises to the cytoplasm. The catalysed reaction is D-glyceraldehyde 3-phosphate = dihydroxyacetone phosphate. It functions in the pathway carbohydrate biosynthesis; gluconeogenesis. The protein operates within carbohydrate degradation; glycolysis; D-glyceraldehyde 3-phosphate from glycerone phosphate: step 1/1. Its function is as follows. Involved in the gluconeogenesis. Catalyzes stereospecifically the conversion of dihydroxyacetone phosphate (DHAP) to D-glyceraldehyde-3-phosphate (G3P). This chain is Probable triosephosphate isomerase 2, found in Listeria monocytogenes serotype 4b (strain F2365).